The sequence spans 459 residues: Transcription factor AP-2-beta (459 aa).

A Glycyl lysine isopeptide (Lys-Gly) (interchain with G-Cter in SUMO) cross-link involves residue Lys21. The disordered stretch occupies residues 30-139 (HDGVPSHSSR…PQLSGLDPRR (110 aa)). Over residues 35-51 (SHSSRLSQLGSVSQGPY) the composition is skewed to polar residues. Positions 121 to 132 (LLPQPRAALPQL) are enriched in low complexity. A Phosphoserine; by PKA modification is found at Ser258. The H-S-H (helix-span-helix), dimerization stretch occupies residues 299–429 (RRKAANVTLL…YLTEALKGMD (131 aa)). The interval 435 to 459 (NTTNRHTSGEGPGSKTGDKEEKHRK) is disordered. Residues 450 to 459 (TGDKEEKHRK) are compositionally biased toward basic and acidic residues.

It belongs to the AP-2 family. As to quaternary structure, binds DNA as a dimer. Can form homodimers or heterodimers with other AP-2 family members. Interacts with CITED4. Interacts with UBE2I. Interacts with KCTD1; this interaction represses transcription activation. Interacts with CITED2 (via C-terminus); the interaction stimulates TFAP2B-transcriptional activity. Sumoylated. Sumoylated on Lys-21; which inhibits transcriptional activity. In terms of tissue distribution, localizes to neurons in areas of the cerebral cortex, cerebellum and hypothalamus (at protein level).

It is found in the nucleus. In terms of biological role, sequence-specific DNA-binding protein that interacts with inducible viral and cellular enhancer elements to regulate transcription of selected genes. AP-2 factors bind to the consensus sequence 5'-GCCNNNGGC-3' and activate genes involved in a large spectrum of important biological functions including proper eye, face, body wall, limb and neural tube development. They also suppress a number of genes including MCAM/MUC18, C/EBP alpha and MYC. AP-2-beta appears to be required for normal face and limb development and for proper terminal differentiation and function of renal tubular epithelia. The chain is Transcription factor AP-2-beta (Tfap2b) from Mus musculus (Mouse).